The chain runs to 225 residues: Uracil-DNA glycosylase (225 aa).

Asp65 (proton acceptor) is an active-site residue.

It belongs to the uracil-DNA glycosylase (UDG) superfamily. UNG family.

The protein localises to the cytoplasm. The catalysed reaction is Hydrolyzes single-stranded DNA or mismatched double-stranded DNA and polynucleotides, releasing free uracil.. Excises uracil residues from the DNA which can arise as a result of misincorporation of dUMP residues by DNA polymerase or due to deamination of cytosine. This Bacillus cytotoxicus (strain DSM 22905 / CIP 110041 / 391-98 / NVH 391-98) protein is Uracil-DNA glycosylase.